The following is a 328-amino-acid chain: GMP reductase (328 aa).

Catalysis depends on Cys176, which acts as the Thioimidate intermediate. Residue 205-228 (IIADGGIRTHGDIAKSIRFGASMI) participates in NADP(+) binding.

The protein belongs to the IMPDH/GMPR family. GuaC type 2 subfamily.

The catalysed reaction is IMP + NH4(+) + NADP(+) = GMP + NADPH + 2 H(+). In terms of biological role, catalyzes the irreversible NADPH-dependent deamination of GMP to IMP. It functions in the conversion of nucleobase, nucleoside and nucleotide derivatives of G to A nucleotides, and in maintaining the intracellular balance of A and G nucleotides. This chain is GMP reductase, found in Streptococcus pneumoniae (strain JJA).